A 102-amino-acid chain; its full sequence is Virulence plasmid protein pGP4-D (102 aa).

The polypeptide is Virulence plasmid protein pGP4-D (Chlamydia trachomatis serovar L2 (strain ATCC VR-902B / DSM 19102 / 434/Bu)).